The sequence spans 448 residues: Phosphoglucosamine mutase (448 aa).

S101 acts as the Phosphoserine intermediate in catalysis. Residues S101, D242, D244, and D246 each contribute to the Mg(2+) site. S101 is subject to Phosphoserine.

The protein belongs to the phosphohexose mutase family. It depends on Mg(2+) as a cofactor. Activated by phosphorylation.

It carries out the reaction alpha-D-glucosamine 1-phosphate = D-glucosamine 6-phosphate. Functionally, catalyzes the conversion of glucosamine-6-phosphate to glucosamine-1-phosphate. The protein is Phosphoglucosamine mutase of Afipia carboxidovorans (strain ATCC 49405 / DSM 1227 / KCTC 32145 / OM5) (Oligotropha carboxidovorans).